The chain runs to 396 residues: Subtilisin-like protease 5 (396 aa).

The N-terminal stretch at 1-20 (MTGFFTFLSFSLAALSVTNA) is a signal peptide. Positions 21-116 (AHILSVPKGA…VEPDAIISQH (96 aa)) are excised as a propeptide. Residues 37–113 (YIVVMKDDTS…VAFVEPDAII (77 aa)) enclose the Inhibitor I9 domain. N-linked (GlcNAc...) asparagine glycosylation occurs at Asn63. The 272-residue stretch at 125–396 (PWGLSRLSNR…SRLLYNGSGR (272 aa)) folds into the Peptidase S8 domain. Residues Asp156 and His187 each act as charge relay system in the active site. N-linked (GlcNAc...) asparagine glycosylation is found at Asn230 and Asn248. Catalysis depends on Ser342, which acts as the Charge relay system. Residues 376–389 (PTIRNPGPDTTSRL) show a composition bias toward polar residues. The interval 376 to 396 (PTIRNPGPDTTSRLLYNGSGR) is disordered. A glycan (N-linked (GlcNAc...) asparagine) is linked at Asn392.

It belongs to the peptidase S8 family.

The protein localises to the secreted. In terms of biological role, secreted subtilisin-like serine protease with keratinolytic activity that contributes to pathogenicity. The polypeptide is Subtilisin-like protease 5 (SUB5) (Trichophyton tonsurans (Scalp ringworm fungus)).